A 367-amino-acid chain; its full sequence is Adenosine deaminase (367 aa).

The Zn(2+) site is built by His-46 and His-48. A purine D-ribonucleoside is bound by residues His-48–Asp-50, Asp-176, and Gly-205. Residues Thr-174 to Ala-188 form a gating helix loop; regulates binding affinity for substrates and thus substrate selectivity region. Residue His-230 coordinates Zn(2+). The a purine D-ribonucleoside site is built by Glu-233, His-257, and Asp-314. Position 314 (Asp-314) interacts with Zn(2+).

The protein belongs to the metallo-dependent hydrolases superfamily. Adenosine and AMP deaminases family. Requires Zn(2+) as cofactor.

The catalysed reaction is adenosine + H2O + H(+) = inosine + NH4(+). It catalyses the reaction S-methyl-5'-thioadenosine + H2O + H(+) = S-methyl-5'-thioinosine + NH4(+). It functions in the pathway purine metabolism; purine nucleoside salvage. With respect to regulation, inhibited by coformycin and methylthiocoformycin (MT-coformycin). Catalyzes the hydrolytic deamination of adenosine to produce inosine. Unlike mammalian adenosine deaminases, also catalyzes the deamination of 5'-methylthioadenosine (MTA), a by-product of polyamine biosynthesis, to produce 5'-methylthioinosine (MTI). Plays an essential role in the purine salvage pathway which allows the parasite to use host cell purines for the synthesis of nucleic acids. The sequence is that of Adenosine deaminase from Plasmodium falciparum (isolate 3D7).